Consider the following 892-residue polypeptide: Histone deacetylase 4 (892 aa).

The interval 145 to 225 (NGNLSNLSVP…MSNVNGHDNS (81 aa)) is disordered. 2 stretches are compositionally biased toward polar residues: residues 171-192 (SAPTSSRKSDLPRTNSTTISQL) and 208-222 (ESNSQSNLMSNVNGH). The segment at 481 to 822 (STGLGYDPLM…VQALIGESDD (342 aa)) is histone deacetylase. His628 is an active-site residue.

It belongs to the histone deacetylase family. HD type 2 subfamily.

It localises to the nucleus. It catalyses the reaction N(6)-acetyl-L-lysyl-[histone] + H2O = L-lysyl-[histone] + acetate. Its function is as follows. Responsible for the deacetylation of lysine residues on the N-terminal part of the core histones (H2A, H2B, H3 and H4). Histone deacetylation gives a tag for epigenetic repression and plays an important role in transcriptional regulation, cell cycle progression and developmental events. Histone deacetylases act via the formation of large multiprotein complexes. This chain is Histone deacetylase 4 (hda-4), found in Caenorhabditis briggsae.